Consider the following 159-residue polypeptide: uncharacterized protein (159 aa).

The region spanning 7-151 is the N-acetyltransferase domain; the sequence is LLINYKTLEE…NPLVWHPASE (145 aa).

This is an uncharacterized protein from Bacillus licheniformis (strain ATCC 14580 / DSM 13 / JCM 2505 / CCUG 7422 / NBRC 12200 / NCIMB 9375 / NCTC 10341 / NRRL NRS-1264 / Gibson 46).